The primary structure comprises 249 residues: Putative TrmH family tRNA/rRNA methyltransferase YacO (249 aa).

Gly198, Leu218, and Leu227 together coordinate S-adenosyl-L-methionine.

Belongs to the class IV-like SAM-binding methyltransferase superfamily. RNA methyltransferase TrmH family.

The sequence is that of Putative TrmH family tRNA/rRNA methyltransferase YacO (yacO) from Bacillus subtilis (strain 168).